A 233-amino-acid polypeptide reads, in one-letter code: VIGGDECNINEHPFLVLVYYDDYQCGGTLINEEWVLTAAHCNGKNMEIYLGVHSKKVPNKDVQRRVPKEKFFCDSSKTYTKWNKDIMLIRLDRPVRKSAHIAPLSLPSSPPSVGSVCRVMGWGTITSPQETYPDVPHCAKINLLDYSECRAAYPGLPPKSRTLCAGVLEGGKDTCGGDSGGPLICNGQFQGIVSWGGDPCAQPHEPGSYTNVFDHLDWIKGIIAGNTDATCPL.

In terms of domain architecture, Peptidase S1 spans 1–224; it reads VIGGDECNIN…HLDWIKGIIA (224 aa). 6 cysteine pairs are disulfide-bonded: cysteine 7–cysteine 138, cysteine 25–cysteine 41, cysteine 73–cysteine 231, cysteine 117–cysteine 185, cysteine 149–cysteine 164, and cysteine 175–cysteine 200. Residues histidine 40 and aspartate 85 each act as charge relay system in the active site. Catalysis depends on serine 179, which acts as the Charge relay system.

This sequence belongs to the peptidase S1 family. Snake venom subfamily. Monomer. As to expression, expressed by the venom gland.

It is found in the secreted. Functionally, thrombin-like snake venom serine protease that clots rabbit fibrinogen. Only the beta chain of fibrinogen (FGB) is cleaved, releasing fibrinopeptide B. Incubation with human fibrinogen alpha and beta resulted in cleavage of both fibrinogen chains but generated neither fibrinopeptide A nor fibrinopeptide B. Promotes clotting of rabbit fibrinogen, but not bovine or human fibrinogen. The protein is Thrombin-like enzyme elegaxobin-1 of Protobothrops elegans (Elegant pitviper).